Reading from the N-terminus, the 636-residue chain is DNA ligase (636 aa).

The active-site N6-AMP-lysine intermediate is Lys-113. A BRCT domain is found at 560-636; sequence NSEGIFQNQT…KSSFSKKFEK (77 aa).

Belongs to the NAD-dependent DNA ligase family.

It catalyses the reaction NAD(+) + (deoxyribonucleotide)n-3'-hydroxyl + 5'-phospho-(deoxyribonucleotide)m = (deoxyribonucleotide)n+m + AMP + beta-nicotinamide D-nucleotide.. Its function is as follows. Catalyzes the formation of phosphodiester linkages between 5'-phosphoryl and 3'-hydroxyl groups in double-stranded DNA using NAD as a coenzyme and as the energy source for the reaction. In Acanthamoeba polyphaga (Amoeba), this protein is DNA ligase.